Consider the following 212-residue polypeptide: Pyridoxine/pyridoxamine 5'-phosphate oxidase (212 aa).

Residues 61–66 (RTVLLK), 76–77 (FT), Lys82, Lys83, and Gln105 contribute to the FMN site. Residue Lys66 participates in substrate binding. Substrate contacts are provided by Tyr123, Arg127, and Ser131. FMN contacts are provided by residues 140 to 141 (QS) and Trp185. Position 191–193 (191–193 (RLH)) interacts with substrate. Arg195 provides a ligand contact to FMN.

This sequence belongs to the pyridoxamine 5'-phosphate oxidase family. As to quaternary structure, homodimer. FMN is required as a cofactor.

It catalyses the reaction pyridoxamine 5'-phosphate + O2 + H2O = pyridoxal 5'-phosphate + H2O2 + NH4(+). The catalysed reaction is pyridoxine 5'-phosphate + O2 = pyridoxal 5'-phosphate + H2O2. The protein operates within cofactor metabolism; pyridoxal 5'-phosphate salvage; pyridoxal 5'-phosphate from pyridoxamine 5'-phosphate: step 1/1. Its pathway is cofactor metabolism; pyridoxal 5'-phosphate salvage; pyridoxal 5'-phosphate from pyridoxine 5'-phosphate: step 1/1. Functionally, catalyzes the oxidation of either pyridoxine 5'-phosphate (PNP) or pyridoxamine 5'-phosphate (PMP) into pyridoxal 5'-phosphate (PLP). This is Pyridoxine/pyridoxamine 5'-phosphate oxidase from Vesicomyosocius okutanii subsp. Calyptogena okutanii (strain HA).